The primary structure comprises 443 residues: Probable glycine dehydrogenase (decarboxylating) subunit 1 (443 aa).

Belongs to the GcvP family. N-terminal subunit subfamily. The glycine cleavage system is composed of four proteins: P, T, L and H. In this organism, the P 'protein' is a heterodimer of two subunits.

It carries out the reaction N(6)-[(R)-lipoyl]-L-lysyl-[glycine-cleavage complex H protein] + glycine + H(+) = N(6)-[(R)-S(8)-aminomethyldihydrolipoyl]-L-lysyl-[glycine-cleavage complex H protein] + CO2. The glycine cleavage system catalyzes the degradation of glycine. The P protein binds the alpha-amino group of glycine through its pyridoxal phosphate cofactor; CO(2) is released and the remaining methylamine moiety is then transferred to the lipoamide cofactor of the H protein. This Nitratidesulfovibrio vulgaris (strain DSM 19637 / Miyazaki F) (Desulfovibrio vulgaris) protein is Probable glycine dehydrogenase (decarboxylating) subunit 1.